The following is a 56-amino-acid chain: Ovomucoid (56 aa).

A Kazal-like domain is found at 6–56 (VDCSEYPKPACTLEYRPLCGSDNKTYANKCNFCNAVVESNGTLTLSHFGKC). 3 disulfide bridges follow: cysteine 8–cysteine 38, cysteine 16–cysteine 35, and cysteine 24–cysteine 56. Asparagine 45 carries an N-linked (GlcNAc...) asparagine glycan.

It is found in the secreted. This Callipepla californica (California quail) protein is Ovomucoid.